The sequence spans 36 residues: Toxin Iob1 (36 aa).

Intrachain disulfides connect C6/C21, C13/C26, and C20/C33.

Its subcellular location is the secreted. Its function is as follows. Binds reversibly and blocks N-type voltage-gated calcium channels (Cav). The polypeptide is Toxin Iob1 (Isyndus obscurus (Assassin bug)).